The primary structure comprises 407 residues: Arginine deiminase (407 aa).

Cys-397 acts as the Amidino-cysteine intermediate in catalysis.

It belongs to the arginine deiminase family.

It localises to the cytoplasm. It carries out the reaction L-arginine + H2O = L-citrulline + NH4(+). The protein operates within amino-acid degradation; L-arginine degradation via ADI pathway; carbamoyl phosphate from L-arginine: step 1/2. In Vibrio cholerae serotype O1 (strain ATCC 39541 / Classical Ogawa 395 / O395), this protein is Arginine deiminase.